A 297-amino-acid chain; its full sequence is HTH-type transcriptional regulator ArgP (297 aa).

Residues 4-60 (PDYRTLQALDAVIRERGFERAAQKLCITQSAVSQRIKQLENTFGQPLLVRTVPPRPT) enclose the HTH lysR-type domain. Positions 21 to 40 (FERAAQKLCITQSAVSQRIK) form a DNA-binding region, H-T-H motif.

This sequence belongs to the LysR transcriptional regulatory family. As to quaternary structure, homodimer.

Its function is as follows. Controls the transcription of genes involved in arginine and lysine metabolism. This chain is HTH-type transcriptional regulator ArgP, found in Cronobacter sakazakii (strain ATCC BAA-894) (Enterobacter sakazakii).